A 389-amino-acid chain; its full sequence is Putative serine/threonine-protein kinase (389 aa).

Residues 15-356 form the Protein kinase domain; sequence YRIEKLINRG…LMVSNYLPWY (342 aa). The active-site Proton acceptor is the Asp164.

The protein belongs to the protein kinase superfamily. Ser/Thr protein kinase family.

It catalyses the reaction L-seryl-[protein] + ATP = O-phospho-L-seryl-[protein] + ADP + H(+). The enzyme catalyses L-threonyl-[protein] + ATP = O-phospho-L-threonyl-[protein] + ADP + H(+). The sequence is that of Putative serine/threonine-protein kinase from Mycoplasma pneumoniae (strain ATCC 29342 / M129 / Subtype 1) (Mycoplasmoides pneumoniae).